Here is an 802-residue protein sequence, read N- to C-terminus: Putative transcriptional regulator cudA (802 aa).

Disordered stretches follow at residues 1-148 (MNQS…PSAI), 154-173 (ISNN…NLLL), 381-446 (NNIN…NNEN), and 636-658 (QPQQ…QQGQ). The segment covering 25–63 (NNNNNGNNGMMMNQQQMQQHVVPHLHHLQQQQQQPQQQQ) has biased composition (low complexity). Over residues 69-88 (DYSNSPNGTTNGSTMSPNCI) the composition is skewed to polar residues. Over residues 89-128 (NTNNNNNNNNNNNNNSNNNNNNNNNASNNLTSNKSSSTNT) the composition is skewed to low complexity. Residues 129-142 (PQIGQLQASPANLT) are compositionally biased toward polar residues. Residues 381-445 (NNINNNNNIN…CNNNNNNNNE (65 aa)) show a composition bias toward low complexity.

Expressed in the prestalk cells that constitute the slug tip (pstA cells) and in prespore cells (at protein level). Not expressed in the band of prestalk cells that lies behind the slug tip (pstO cells). Highly expressed in pstO derived papilla cells during culmination.

The protein localises to the nucleus. Its subcellular location is the nucleoplasm. Its function is as follows. Essential for normal culmination. May function as a transcriptional regulator. This is Putative transcriptional regulator cudA (cudA) from Dictyostelium discoideum (Social amoeba).